A 145-amino-acid polypeptide reads, in one-letter code: uncharacterized protein (145 aa).

The stretch at 1–41 (MEQHYHQQNQLRQLKQQQLKELLQQQSKDKEEDEQKHDDYR) forms a coiled coil. Residues 1 to 91 (MEQHYHQQNQ…LQISEPEGES (91 aa)) form a disordered region. The segment covering 7 to 26 (QQNQLRQLKQQQLKELLQQQ) has biased composition (low complexity). Residues 27 to 42 (SKDKEEDEQKHDDYRS) show a composition bias toward basic and acidic residues. The segment covering 43-58 (PTKTTTTTATSTSAAT) has biased composition (low complexity).

This is an uncharacterized protein from Dictyostelium discoideum (Social amoeba).